A 263-amino-acid chain; its full sequence is MLELRLVQGSLLKKVLESIKDLVNDANFDCSSTGFSLQAMDSSHVALVSLLLRSEGFEHYRCDRNLSMGMNLGNMSKMLKCAGNDDIITIKADDGGDTVTFMFESPTQDKIADFEMKLMDIDSEHLGIPDAEYHSIVRMPSNEFSRICKDLSSIGDTVVISVTKEGVKFSTAGDIGTANIVLRQNTTVDKPEDAIVIEMKEPVSLSFALRYMNSFTKATPLSDTVTISLSSELPVVVEYKVAEMGYIRYYLAPKIEEEEDTNP.

Residues 61–80 (RCDRNLSMGMNLGNMSKMLK) mediate DNA binding.

The protein belongs to the PCNA family. In terms of assembly, homo- and heterotrimer. Interacts with POLH, ATXR5 and ATXR6.

It is found in the nucleus. Its function is as follows. This protein is an auxiliary protein of DNA polymerase delta and is involved in the control of eukaryotic DNA replication by increasing the polymerase's processibility during elongation of the leading strand. This Arabidopsis thaliana (Mouse-ear cress) protein is Proliferating cellular nuclear antigen 1 (PCNA).